The chain runs to 74 residues: Acyl carrier protein (74 aa).

A Carrier domain is found at 1–73; the sequence is MAVFEKVQEI…DLVAYVEEKS (73 aa). Serine 35 bears the O-(pantetheine 4'-phosphoryl)serine mark.

This sequence belongs to the acyl carrier protein (ACP) family. Post-translationally, 4'-phosphopantetheine is transferred from CoA to a specific serine of apo-ACP by AcpS. This modification is essential for activity because fatty acids are bound in thioester linkage to the sulfhydryl of the prosthetic group.

It is found in the cytoplasm. It participates in lipid metabolism; fatty acid biosynthesis. Carrier of the growing fatty acid chain in fatty acid biosynthesis. This chain is Acyl carrier protein, found in Streptococcus pyogenes serotype M1.